The following is a 97-amino-acid chain: Peptide Y (97 aa).

The first 28 residues, methionine 1–alanine 28, serve as a signal peptide directing secretion. A Tyrosine amide modification is found at tyrosine 64. Positions serine 68–tryptophan 97 are cleaved as a propeptide — C-terminal extension.

Belongs to the NPY family.

It localises to the secreted. This is Peptide Y from Dicentrarchus labrax (European seabass).